The chain runs to 1348 residues: Phosphoribosylformylglycinamidine synthase (1348 aa).

Residues 300-311 (GAATGAGGEIRD) and A701 each bind ATP. The Mg(2+) site is built by D702, E741, N745, and D941. S943 provides a ligand contact to ATP. A Glutamine amidotransferase type-1 domain is found at 1099 to 1348 (VAILREQGVN…MFRNARVWCG (250 aa)). The active-site Nucleophile is the C1192. Active-site residues include H1313 and E1315.

This sequence in the N-terminal section; belongs to the FGAMS family. As to quaternary structure, monomer.

The protein localises to the cytoplasm. The enzyme catalyses N(2)-formyl-N(1)-(5-phospho-beta-D-ribosyl)glycinamide + L-glutamine + ATP + H2O = 2-formamido-N(1)-(5-O-phospho-beta-D-ribosyl)acetamidine + L-glutamate + ADP + phosphate + H(+). It participates in purine metabolism; IMP biosynthesis via de novo pathway; 5-amino-1-(5-phospho-D-ribosyl)imidazole from N(2)-formyl-N(1)-(5-phospho-D-ribosyl)glycinamide: step 1/2. Phosphoribosylformylglycinamidine synthase involved in the purines biosynthetic pathway. Catalyzes the ATP-dependent conversion of formylglycinamide ribonucleotide (FGAR) and glutamine to yield formylglycinamidine ribonucleotide (FGAM) and glutamate. The chain is Phosphoribosylformylglycinamidine synthase from Xanthomonas campestris pv. campestris (strain ATCC 33913 / DSM 3586 / NCPPB 528 / LMG 568 / P 25).